The primary structure comprises 76 residues: UPF0291 protein BPUM_1689 (76 aa).

Disordered regions lie at residues Met1–Lys31 and Asp56–His76. Composition is skewed to basic and acidic residues over residues Glu12–Lys31 and Thr63–His76.

Belongs to the UPF0291 family.

It is found in the cytoplasm. This is UPF0291 protein BPUM_1689 from Bacillus pumilus (strain SAFR-032).